Reading from the N-terminus, the 275-residue chain is Uroplakin-3b (275 aa).

Residues 1-26 (MVRTRWQPPLRALLLLVLVWLPQSLS) form the signal peptide. At 27 to 196 (LDLIAYVPQI…DTWPGRRSGC (170 aa)) the chain is on the lumenal side. Asn-77 carries an N-linked (GlcNAc...) asparagine glycan. The helical transmembrane segment at 197–217 (MIVITSILSALAGLLLLAFLA) threads the bilayer. Residues 218–275 (ASTTRFSSLWWPEEAPEQLRIGSFMGKRYMTHHIPPSEAATLPVGCEPGLDPLPSLSP) are Cytoplasmic-facing.

This sequence belongs to the uroplakin-3 family. In terms of assembly, heterodimer with uroplakin-1B (UPK1B). Expression is urothelium-specific.

It localises to the cell membrane. In terms of biological role, component of the asymmetric unit membrane (AUM); a highly specialized biomembrane elaborated by terminally differentiated urothelial cells. May play an important role in AUM-cytoskeleton interaction in terminally differentiated urothelial cells. It also contributes to the formation of urothelial glycocalyx which may play an important role in preventing bacterial adherence. The chain is Uroplakin-3b (Upk3b) from Mus musculus (Mouse).